A 218-amino-acid polypeptide reads, in one-letter code: Thiopurine S-methyltransferase (218 aa).

Residues tryptophan 10, leucine 45, glutamate 66, and arginine 123 each coordinate S-adenosyl-L-methionine.

It belongs to the class I-like SAM-binding methyltransferase superfamily. TPMT family.

The protein resides in the cytoplasm. It catalyses the reaction S-adenosyl-L-methionine + a thiopurine = S-adenosyl-L-homocysteine + a thiopurine S-methylether.. The protein is Thiopurine S-methyltransferase of Shewanella sp. (strain MR-4).